The primary structure comprises 200 residues: Max dimerization protein 3 (200 aa).

Disordered stretches follow at residues 26 to 56 and 134 to 164; these read EHGYASILPCDPATPGRRKRQRTNSNPDNVR and LLPPNTERIRTDSLDSSTLSSERSDSDQEDL. A bHLH domain is found at 54–106; sequence NVRSVHNELEKHRRAQLRRCLEQLKQQVPLSMENSRHTTLSLLHRAKQHIKKL.

As to quaternary structure, efficient DNA binding requires dimerization with another bHLH protein. Binds DNA as a heterodimer with MAX.

The protein resides in the nucleus. Transcriptional repressor. Binds with MAX to form a sequence-specific DNA-binding protein complex which recognizes the core sequence 5'-CAC[GA]TG-3'. This is Max dimerization protein 3 (mxd3) from Xenopus tropicalis (Western clawed frog).